Reading from the N-terminus, the 652-residue chain is Small ribosomal subunit protein mS39 (652 aa).

Residues 1 to 37 (MYLSRQLRLLPRANIACSLSSSGAHYTTAAPAEDAPI) constitute a mitochondrion transit peptide. PPR repeat units lie at residues 129-163 (DSVV…GNPI), 225-259 (TPQS…QVQL), 260-299 (DTNT…KLRP), 300-338 (NLGT…GVNP), and 547-581 (TGQM…QHRI).

The protein belongs to the mitochondrion-specific ribosomal protein mS39 family.

The protein resides in the mitochondrion. Mitochondrial protein that may have a role in mitochondrial translation. Essential for larval development. The polypeptide is Small ribosomal subunit protein mS39 (Drosophila melanogaster (Fruit fly)).